The primary structure comprises 173 residues: ATP synthase subunit b (173 aa).

The helical transmembrane segment at 18–38 (IFWSLVILIIVAVFFYKFFLP) threads the bilayer.

The protein belongs to the ATPase B chain family. As to quaternary structure, F-type ATPases have 2 components, F(1) - the catalytic core - and F(0) - the membrane proton channel. F(1) has five subunits: alpha(3), beta(3), gamma(1), delta(1), epsilon(1). F(0) has three main subunits: a(1), b(2) and c(10-14). The alpha and beta chains form an alternating ring which encloses part of the gamma chain. F(1) is attached to F(0) by a central stalk formed by the gamma and epsilon chains, while a peripheral stalk is formed by the delta and b chains.

It localises to the cell membrane. F(1)F(0) ATP synthase produces ATP from ADP in the presence of a proton or sodium gradient. F-type ATPases consist of two structural domains, F(1) containing the extramembraneous catalytic core and F(0) containing the membrane proton channel, linked together by a central stalk and a peripheral stalk. During catalysis, ATP synthesis in the catalytic domain of F(1) is coupled via a rotary mechanism of the central stalk subunits to proton translocation. Functionally, component of the F(0) channel, it forms part of the peripheral stalk, linking F(1) to F(0). The chain is ATP synthase subunit b from Bifidobacterium adolescentis (strain ATCC 15703 / DSM 20083 / NCTC 11814 / E194a).